The sequence spans 269 residues: Tryptophan synthase alpha chain (269 aa).

Residues Glu49 and Asp60 each act as proton acceptor in the active site.

Belongs to the TrpA family. As to quaternary structure, tetramer of two alpha and two beta chains.

It catalyses the reaction (1S,2R)-1-C-(indol-3-yl)glycerol 3-phosphate + L-serine = D-glyceraldehyde 3-phosphate + L-tryptophan + H2O. Its pathway is amino-acid biosynthesis; L-tryptophan biosynthesis; L-tryptophan from chorismate: step 5/5. In terms of biological role, the alpha subunit is responsible for the aldol cleavage of indoleglycerol phosphate to indole and glyceraldehyde 3-phosphate. In Salmonella arizonae (strain ATCC BAA-731 / CDC346-86 / RSK2980), this protein is Tryptophan synthase alpha chain.